Consider the following 637-residue polypeptide: Putative pentatricopeptide repeat-containing protein At5g65820 (637 aa).

PPR repeat units follow at residues Ser146–Leu180, Glu182–Pro216, Asp217–Arg247, Asn251–Pro285, Asp286–Pro320, Asn321–Ala355, Asp356–Pro390, Ser391–Pro425, Asp426–Pro460, Gly461–Ser495, Gln498–Glu532, and Asn534–Pro568. Residues Gln616–Gly630 show a composition bias toward basic and acidic residues. A disordered region spans residues Gln616 to Arg637.

Belongs to the PPR family. P subfamily.

In Arabidopsis thaliana (Mouse-ear cress), this protein is Putative pentatricopeptide repeat-containing protein At5g65820.